Here is a 188-residue protein sequence, read N- to C-terminus: Elongation factor P (188 aa).

This sequence belongs to the elongation factor P family.

The protein resides in the cytoplasm. The protein operates within protein biosynthesis; polypeptide chain elongation. Its function is as follows. Involved in peptide bond synthesis. Stimulates efficient translation and peptide-bond synthesis on native or reconstituted 70S ribosomes in vitro. Probably functions indirectly by altering the affinity of the ribosome for aminoacyl-tRNA, thus increasing their reactivity as acceptors for peptidyl transferase. The polypeptide is Elongation factor P (Gemmatimonas aurantiaca (strain DSM 14586 / JCM 11422 / NBRC 100505 / T-27)).